Reading from the N-terminus, the 884-residue chain is Alanine--tRNA ligase (884 aa).

The Zn(2+) site is built by H565, H569, C674, and H678.

Belongs to the class-II aminoacyl-tRNA synthetase family. Requires Zn(2+) as cofactor.

The protein localises to the cytoplasm. It carries out the reaction tRNA(Ala) + L-alanine + ATP = L-alanyl-tRNA(Ala) + AMP + diphosphate. In terms of biological role, catalyzes the attachment of alanine to tRNA(Ala) in a two-step reaction: alanine is first activated by ATP to form Ala-AMP and then transferred to the acceptor end of tRNA(Ala). Also edits incorrectly charged Ser-tRNA(Ala) and Gly-tRNA(Ala) via its editing domain. The sequence is that of Alanine--tRNA ligase from Xanthobacter autotrophicus (strain ATCC BAA-1158 / Py2).